Here is a 247-residue protein sequence, read N- to C-terminus: MNNADELTLDLPNFTGPLDLLLHLIRSQKIDIYDIPIAKITGQYLANLARWQTLDLQIAGEYFVMASTLLRIKSQYLLPKNDFVEEDQYQEDPRAELVEQLVQYSVFQRIAEYFKKRDEEMPITVAKDPSVSPKKKVEPLPLGEITSDELANTFKVVLERFKLRKPQVGQIEVHEASIEEMTTFLKDKLHHRKSTSFFDCIKNFQDLDQVIGLFLAVLELCRDHKILVKQNRDFGDLELEKVETNGK.

It belongs to the ScpA family. In terms of assembly, component of a cohesin-like complex composed of ScpA, ScpB and the Smc homodimer, in which ScpA and ScpB bind to the head domain of Smc. The presence of the three proteins is required for the association of the complex with DNA.

The protein resides in the cytoplasm. Functionally, participates in chromosomal partition during cell division. May act via the formation of a condensin-like complex containing Smc and ScpB that pull DNA away from mid-cell into both cell halves. This is Segregation and condensation protein A from Lactobacillus gasseri (strain ATCC 33323 / DSM 20243 / BCRC 14619 / CIP 102991 / JCM 1131 / KCTC 3163 / NCIMB 11718 / NCTC 13722 / AM63).